The following is a 73-amino-acid chain: Translation initiation factor IF-1 (73 aa).

Positions 1–73 constitute an S1-like domain; sequence MAKKQGAIEI…TRGRIVYRYK (73 aa).

This sequence belongs to the IF-1 family. In terms of assembly, component of the 30S ribosomal translation pre-initiation complex which assembles on the 30S ribosome in the order IF-2 and IF-3, IF-1 and N-formylmethionyl-tRNA(fMet); mRNA recruitment can occur at any time during PIC assembly.

The protein resides in the cytoplasm. One of the essential components for the initiation of protein synthesis. Stabilizes the binding of IF-2 and IF-3 on the 30S subunit to which N-formylmethionyl-tRNA(fMet) subsequently binds. Helps modulate mRNA selection, yielding the 30S pre-initiation complex (PIC). Upon addition of the 50S ribosomal subunit IF-1, IF-2 and IF-3 are released leaving the mature 70S translation initiation complex. The polypeptide is Translation initiation factor IF-1 (Streptomyces coelicolor (strain ATCC BAA-471 / A3(2) / M145)).